Reading from the N-terminus, the 185-residue chain is Hypoxanthine/guanine phosphoribosyltransferase (185 aa).

Belongs to the purine/pyrimidine phosphoribosyltransferase family. Archaeal HPRT subfamily. As to quaternary structure, homodimer.

Its subcellular location is the cytoplasm. The enzyme catalyses IMP + diphosphate = hypoxanthine + 5-phospho-alpha-D-ribose 1-diphosphate. It carries out the reaction GMP + diphosphate = guanine + 5-phospho-alpha-D-ribose 1-diphosphate. It functions in the pathway purine metabolism; IMP biosynthesis via salvage pathway; IMP from hypoxanthine: step 1/1. Functionally, catalyzes a salvage reaction resulting in the formation of IMP that is energically less costly than de novo synthesis. In Aciduliprofundum boonei (strain DSM 19572 / T469), this protein is Hypoxanthine/guanine phosphoribosyltransferase.